We begin with the raw amino-acid sequence, 735 residues long: Ion-translocating oxidoreductase complex subunit C (735 aa).

2 consecutive 4Fe-4S ferredoxin-type domains span residues 368-397 (MGAP…QQLY) and 407-436 (KATA…VQYF). The [4Fe-4S] cluster site is built by Cys-377, Cys-380, Cys-383, Cys-387, Cys-416, Cys-419, Cys-422, and Cys-426. The disordered stretch occupies residues 534 to 711 (QARAKQAAHP…EPVEPADPRK (178 aa)).

The protein belongs to the 4Fe4S bacterial-type ferredoxin family. RnfC subfamily. The complex is composed of six subunits: RsxA, RsxB, RsxC, RsxD, RsxE and RsxG. [4Fe-4S] cluster serves as cofactor.

Its subcellular location is the cell inner membrane. Functionally, part of a membrane-bound complex that couples electron transfer with translocation of ions across the membrane. Required to maintain the reduced state of SoxR. The sequence is that of Ion-translocating oxidoreductase complex subunit C from Salmonella paratyphi A (strain ATCC 9150 / SARB42).